Here is a 170-residue protein sequence, read N- to C-terminus: Zinc finger matrin-type protein 5 (170 aa).

The C3H1-type zinc-finger motif lies at 51–79 (EQNKRPCRKFLLTGQCDFGSNCRFSHMSE). The disordered stretch occupies residues 150–170 (PPSLRAPPPGGWPLQPRVQWG).

In terms of assembly, component of the U11/U12 snRNPs that are part of the U12-type spliceosome. Not found in the major spliceosome.

The protein localises to the nucleus. The polypeptide is Zinc finger matrin-type protein 5 (ZMAT5) (Homo sapiens (Human)).